The following is a 61-amino-acid chain: Metallothionein-1H (61 aa).

At Met1 the chain carries N-acetylmethionine. The beta stretch occupies residues 1–29 (MDPNCSCEAGGSCACAGSCKCKKCKCTSC). Positions 5, 7, 13, 15, 19, 21, 24, 26, 29, 33, 34, 36, 37, 41, 44, 48, 50, and 57 each coordinate a divalent metal cation. The tract at residues 30–61 (KKSCCSCCPLGCAKCAQGCICKGASEKCSCCA) is alpha. Phosphoserine is present on Ser58. Residues Cys59 and Cys60 each coordinate a divalent metal cation.

This sequence belongs to the metallothionein superfamily. Type 1 family. Monomer.

Its function is as follows. Metallothioneins have a high content of cysteine residues that bind various heavy metals; these proteins are transcriptionally regulated by both heavy metals and glucocorticoids. This is Metallothionein-1H (MT1H) from Homo sapiens (Human).